We begin with the raw amino-acid sequence, 225 residues long: UPF0173 metal-dependent hydrolase Pcal_1074 (225 aa).

It belongs to the UPF0173 family.

This Pyrobaculum calidifontis (strain DSM 21063 / JCM 11548 / VA1) protein is UPF0173 metal-dependent hydrolase Pcal_1074.